A 127-amino-acid polypeptide reads, in one-letter code: Anti-adapter protein IraD (127 aa).

Belongs to the GpW/Gp25 family. IraD subfamily. As to quaternary structure, interacts with RssB.

Its subcellular location is the cytoplasm. Inhibits RpoS proteolysis by regulating RssB activity, thereby increasing the stability of the sigma stress factor RpoS during oxidative stress. Its effect on RpoS stability is due to its interaction with RssB, which probably blocks the interaction of RssB with RpoS, and the consequent delivery of the RssB-RpoS complex to the ClpXP protein degradation pathway. The sequence is that of Anti-adapter protein IraD from Escherichia coli (strain UTI89 / UPEC).